A 275-amino-acid polypeptide reads, in one-letter code: Low affinity immunoglobulin gamma Fc region receptor III-A (275 aa).

Positions 1–23 are cleaved as a signal peptide; the sequence is MSVWTSRKAAEDNDTSLSSGIRA. The Extracellular portion of the chain corresponds to 24-207; that stretch reads GLQKAVVTLH…SPSTFPPWHQ (184 aa). Ig-like C2-type domains are found at residues 28–92 and 101–192; these read AVVT…YTCQ and PVNL…LRIT. 2 disulfide bridges follow: C49–C91 and C131–C175. N-linked (GlcNAc...) asparagine glycosylation is found at N65, N168, and N183. A helical membrane pass occupies residues 208-228; sequence ITFCLLIGLLFTIDTVMYFSV. The Cytoplasmic segment spans residues 229–275; sequence QKGLRRSTADYEEPEVHWSKEPENKTISEEKQSFRSSRANSETPENR. A disordered region spans residues 237–275; sequence ADYEEPEVHWSKEPENKTISEEKQSFRSSRANSETPENR. Residue Y239 is modified to Phosphotyrosine. Positions 242-261 are enriched in basic and acidic residues; it reads PEVHWSKEPENKTISEEKQS. Over residues 262 to 275 the composition is skewed to polar residues; that stretch reads FRSSRANSETPENR.

In terms of assembly, forms a heterooligomeric complex with ITAM-containing signaling subunits FCER1G. Interacts (via transmembrane domain) with signaling subunits; this interaction is a prerequisite for receptor complex expression on the cell surface and intracellular signal transduction. Binds the Fc region of antigen-complexed IgG. Post-translationally, N-glycosylated. In terms of processing, phosphorylated following receptor ligation.

It is found in the cell membrane. Receptor for the invariable Fc fragment of immunoglobulin gamma (IgG). Binds with intermediate affinity to both IgG2a and IgG2b. Can bind to IgG2a and IgG2b monomers. Does not display binding to IgG1 or IgG3. Recognizes neutralizing virus-specific IgGs displayed on the cell surface of infected cells and triggers antibody-dependent cellular cytotoxicity (ADCC). Confers protection to lethal influenza virus infection. On splenic dendritic cells, uptakes antigen immune complexes and efficiently divert them into MHC class I and II antigen presentation pathways to provide for superior priming of CD4-positive and CD8-positive T cell immune responses. Mediates neutrophil activation by IgG complexes redundantly with FCGR2A. Plays a role in promoting bone resorption by enhancing osteoclast differentiation following binding to IgG2a. Also acts as a receptor for the Fc region of immunoglobulin epsilon (IgE). Binds with low affinity to both the a and b allotypes of IgE. Has also been shown to bind to IgE allotype a only but not to allotype b. Binds aggregated IgE but not the monomeric form and bound monomeric IgG is readily displaced by IgE complexes. Binding to IgE promotes macrophage-mediated phagocytosis, antigen presentation to T cells, production of pro-inflammatory cytokines and the late phase of cutaneous allergic reactions. Mediates enhanced ADCC in response to afucosylated IgGs. The sequence is that of Low affinity immunoglobulin gamma Fc region receptor III-A from Cricetulus griseus (Chinese hamster).